The primary structure comprises 570 residues: Carotenoid cleavage dioxygenase 8, chloroplastic (570 aa).

The transit peptide at 1-56 directs the protein to the chloroplast; the sequence is MASLITTKAMMSHHHVLSSTRITTLYSDNSIGDQQIKTKPQVPHRLFARRIFGVTR. Positions 254, 305, 372, and 563 each coordinate Fe cation.

Belongs to the carotenoid oxygenase family. Fe(2+) serves as cofactor. In terms of tissue distribution, expressed in flowers, siliques, inflorescence stems, petiole and leaves, and at a much higher level in roots.

Its subcellular location is the plastid. The protein localises to the chloroplast. It carries out the reaction 9-cis-10'-apo-beta-carotenal + 2 O2 = (2E,4E,6E)-7-hydroxy-4-methylhepta-2,4,6-trienal + (11R)-carlactone. The catalysed reaction is all-trans-10'-apo-beta-carotenal + O2 = (2E,4E,6E)-4-methylocta-2,4,6-trienedial + 13-apo-beta-carotenone. Involved in strigolactones biosynthesis by cleaving the C(27) 9-cis-10'-apo-beta-carotenal produced by CCD7. Produces the C(19) carlactone and a C(8) hydroxyaldehyde. Also shows lower activity with all-trans-10'-apo-beta-carotenal producing a C(9) dialdehyde and the C(18) 13-apo-beta-carotenone. Strigolactones are hormones that inhibit tillering and shoot branching through the MAX-dependent pathway, contribute to the regulation of shoot architectural response to phosphate-limiting conditions and function as rhizosphere signal that stimulates hyphal branching of arbuscular mycorrhizal fungi and trigger seed germination of root parasitic weeds. Also active on other carotenoid substrates like licopene or zeaxanthin. This Arabidopsis thaliana (Mouse-ear cress) protein is Carotenoid cleavage dioxygenase 8, chloroplastic.